The following is a 386-amino-acid chain: SWI/SNF-related matrix-associated actin-dependent regulator of chromatin subfamily B member 1 (386 aa).

The interval 1–114 is DNA-binding; the sequence is MMMMALSKTF…DEKYKAVSIS (114 aa).

The protein belongs to the SNF5 family. In terms of assembly, component of the multiprotein chromatin-remodeling complexes SWI/SNF. Component of neural progenitors-specific chromatin remodeling complex (npBAF complex) and the neuron-specific chromatin remodeling complex (nBAF complex). Component of the BAF (SWI/SNF) chromatin remodeling complex. Component of the SWI/SNF-B (PBAF) chromatin remodeling complex. Binds to double-stranded DNA.

It is found in the nucleus. Functionally, involved in chromatin-remodeling. Core component of the BAF (SWI/SNF) complex. This ATP-dependent chromatin-remodeling complex plays important roles in cell proliferation and differentiation, in cellular antiviral activities and inhibition of tumor formation. Belongs to the neural progenitors-specific chromatin remodeling complex (npBAF complex) and the neuron-specific chromatin remodeling complex (nBAF complex) and may play a role in neural development. This is SWI/SNF-related matrix-associated actin-dependent regulator of chromatin subfamily B member 1 (SMARCB1) from Gallus gallus (Chicken).